The primary structure comprises 236 residues: C-&gt;U-editing enzyme APOBEC-1 (236 aa).

The CMP/dCMP-type deaminase domain occupies 10–134 (GDPTLRRRIE…QRNRQGLRDL (125 aa)). His-61 serves as a coordination point for Zn(2+). Glu-63 serves as the catalytic Proton donor. Zn(2+) contacts are provided by Cys-93 and Cys-96.

The protein belongs to the cytidine and deoxycytidylate deaminase family. In terms of assembly, homodimer. Interacts with A1CF; form an mRNA editing complex. Interacts with RBM47; form an mRNA editing complex. Found in a complex with CELF2/CUGBP2 and A1CF. Interacts with HNRPAB. Interacts with SYNCRIP. It depends on Zn(2+) as a cofactor.

The protein localises to the cytoplasm. Its subcellular location is the nucleus. The catalysed reaction is a cytidine in mRNA + H2O + H(+) = a uridine in mRNA + NH4(+). The enzyme catalyses cytidine(6666) in apoB mRNA + H2O + H(+) = uridine(6666) in apoB mRNA + NH4(+). Cytidine deaminase catalyzing the cytidine to uridine postranscriptional editing of a variety of mRNAs. Form complexes with cofactors that confer differential editing activity and selectivity. Responsible for the postranscriptional editing of a CAA codon for Gln to a UAA codon for stop in the apolipoprotein B mRNA. Also involved in CGA (Arg) to UGA (Stop) editing in the NF1 mRNA. May also play a role in the epigenetic regulation of gene expression by participating in DNA demethylation. This is C-&gt;U-editing enzyme APOBEC-1 from Pongo pygmaeus (Bornean orangutan).